Here is a 314-residue protein sequence, read N- to C-terminus: DNA-directed RNA polymerase subunit alpha (314 aa).

Residues 1 to 228 are alpha N-terminal domain (alpha-NTD); that stretch reads MIEIEKPKIE…EHLNIFVGLT (228 aa). The tract at residues 246–314 is alpha C-terminal domain (alpha-CTD); it reads EKVLEMTIEE…ELGLGLRKDD (69 aa).

This sequence belongs to the RNA polymerase alpha chain family. Homodimer. The RNAP catalytic core consists of 2 alpha, 1 beta, 1 beta' and 1 omega subunit. When a sigma factor is associated with the core the holoenzyme is formed, which can initiate transcription.

The enzyme catalyses RNA(n) + a ribonucleoside 5'-triphosphate = RNA(n+1) + diphosphate. DNA-dependent RNA polymerase catalyzes the transcription of DNA into RNA using the four ribonucleoside triphosphates as substrates. This is DNA-directed RNA polymerase subunit alpha from Bacillus cytotoxicus (strain DSM 22905 / CIP 110041 / 391-98 / NVH 391-98).